We begin with the raw amino-acid sequence, 523 residues long: Siroheme synthase (523 aa).

Residues 1 to 203 (MNTFPLFFKL…GNENEAIAQL (203 aa)) form a precorrin-2 dehydrogenase /sirohydrochlorin ferrochelatase region. Residues 22-23 (DV) and 43-44 (PS) contribute to the NAD(+) site. Ser-128 carries the phosphoserine modification. Residues 231-523 (GEVYIVGAGP…DGGLEQLVID (293 aa)) are uroporphyrinogen-III C-methyltransferase. Pro-240 serves as a coordination point for S-adenosyl-L-methionine. The active-site Proton acceptor is the Asp-263. Catalysis depends on Lys-285, which acts as the Proton donor. Residues 316–318 (GGD), Ile-321, 346–347 (TA), Met-398, and Ala-427 each bind S-adenosyl-L-methionine.

This sequence in the N-terminal section; belongs to the precorrin-2 dehydrogenase / sirohydrochlorin ferrochelatase family. It in the C-terminal section; belongs to the precorrin methyltransferase family.

It catalyses the reaction uroporphyrinogen III + 2 S-adenosyl-L-methionine = precorrin-2 + 2 S-adenosyl-L-homocysteine + H(+). The catalysed reaction is precorrin-2 + NAD(+) = sirohydrochlorin + NADH + 2 H(+). The enzyme catalyses siroheme + 2 H(+) = sirohydrochlorin + Fe(2+). It participates in cofactor biosynthesis; adenosylcobalamin biosynthesis; precorrin-2 from uroporphyrinogen III: step 1/1. It functions in the pathway cofactor biosynthesis; adenosylcobalamin biosynthesis; sirohydrochlorin from precorrin-2: step 1/1. The protein operates within porphyrin-containing compound metabolism; siroheme biosynthesis; precorrin-2 from uroporphyrinogen III: step 1/1. Its pathway is porphyrin-containing compound metabolism; siroheme biosynthesis; siroheme from sirohydrochlorin: step 1/1. It participates in porphyrin-containing compound metabolism; siroheme biosynthesis; sirohydrochlorin from precorrin-2: step 1/1. Multifunctional enzyme that catalyzes the SAM-dependent methylations of uroporphyrinogen III at position C-2 and C-7 to form precorrin-2 via precorrin-1. Then it catalyzes the NAD-dependent ring dehydrogenation of precorrin-2 to yield sirohydrochlorin. Finally, it catalyzes the ferrochelation of sirohydrochlorin to yield siroheme. This Psychrobacter cryohalolentis (strain ATCC BAA-1226 / DSM 17306 / VKM B-2378 / K5) protein is Siroheme synthase.